We begin with the raw amino-acid sequence, 419 residues long: UDP-N-acetylmuramoylalanine--D-glutamate ligase (419 aa).

G109 to T115 is an ATP binding site.

It belongs to the MurCDEF family.

The protein resides in the cytoplasm. The catalysed reaction is UDP-N-acetyl-alpha-D-muramoyl-L-alanine + D-glutamate + ATP = UDP-N-acetyl-alpha-D-muramoyl-L-alanyl-D-glutamate + ADP + phosphate + H(+). It participates in cell wall biogenesis; peptidoglycan biosynthesis. In terms of biological role, cell wall formation. Catalyzes the addition of glutamate to the nucleotide precursor UDP-N-acetylmuramoyl-L-alanine (UMA). The protein is UDP-N-acetylmuramoylalanine--D-glutamate ligase of Chlamydia caviae (strain ATCC VR-813 / DSM 19441 / 03DC25 / GPIC) (Chlamydophila caviae).